A 285-amino-acid chain; its full sequence is Protoheme IX farnesyltransferase (285 aa).

Helical transmembrane passes span 13-33, 40-60, 89-109, 110-130, 137-157, 165-185, 194-214, 230-252, and 265-285; these read LGKL…AFLA, LLPI…AMII, EAII…FIDN, ILTA…YTIL, LNIV…YTSL, GFLL…SLAL, AHYP…AIAI, INLI…SYRL, and FIFS…VKLI.

The protein belongs to the UbiA prenyltransferase family. Protoheme IX farnesyltransferase subfamily.

Its subcellular location is the cell membrane. The catalysed reaction is heme b + (2E,6E)-farnesyl diphosphate + H2O = Fe(II)-heme o + diphosphate. The protein operates within porphyrin-containing compound metabolism; heme O biosynthesis; heme O from protoheme: step 1/1. Its function is as follows. Converts heme B (protoheme IX) to heme O by substitution of the vinyl group on carbon 2 of heme B porphyrin ring with a hydroxyethyl farnesyl side group. This chain is Protoheme IX farnesyltransferase, found in Saccharolobus islandicus (strain Y.N.15.51 / Yellowstone #2) (Sulfolobus islandicus).